We begin with the raw amino-acid sequence, 95 residues long: DNA-directed RNA polymerase subunit Rpo6 (95 aa).

Belongs to the archaeal Rpo6/eukaryotic RPB6 RNA polymerase subunit family. In terms of assembly, part of the 13-subunit RNA polymerase complex.

The protein localises to the cytoplasm. It catalyses the reaction RNA(n) + a ribonucleoside 5'-triphosphate = RNA(n+1) + diphosphate. DNA-dependent RNA polymerase (RNAP) catalyzes the transcription of DNA into RNA using the four ribonucleoside triphosphates as substrates. The chain is DNA-directed RNA polymerase subunit Rpo6 from Saccharolobus solfataricus (strain ATCC 35092 / DSM 1617 / JCM 11322 / P2) (Sulfolobus solfataricus).